The sequence spans 539 residues: Phosphoenolpyruvate carboxykinase (ATP) (539 aa).

R64, Y206, and K212 together coordinate substrate. ATP contacts are provided by residues K212, H231, and 247–255 (GLSGTGKTT). K212 and H231 together coordinate Mn(2+). D268 lines the Mn(2+) pocket. Residues E296, R332, 448–449 (RI), and T454 contribute to the ATP site. R332 lines the substrate pocket.

Belongs to the phosphoenolpyruvate carboxykinase (ATP) family. As to quaternary structure, monomer. Mn(2+) serves as cofactor.

The protein resides in the cytoplasm. It catalyses the reaction oxaloacetate + ATP = phosphoenolpyruvate + ADP + CO2. The protein operates within carbohydrate biosynthesis; gluconeogenesis. Its function is as follows. Involved in the gluconeogenesis. Catalyzes the conversion of oxaloacetate (OAA) to phosphoenolpyruvate (PEP) through direct phosphoryl transfer between the nucleoside triphosphate and OAA. The protein is Phosphoenolpyruvate carboxykinase (ATP) of Salmonella gallinarum (strain 287/91 / NCTC 13346).